Reading from the N-terminus, the 222-residue chain is Ribosomal RNA small subunit methyltransferase I (222 aa).

This sequence belongs to the methyltransferase superfamily. RsmI family.

It localises to the cytoplasm. The enzyme catalyses cytidine(1402) in 16S rRNA + S-adenosyl-L-methionine = 2'-O-methylcytidine(1402) in 16S rRNA + S-adenosyl-L-homocysteine + H(+). Catalyzes the 2'-O-methylation of the ribose of cytidine 1402 (C1402) in 16S rRNA. The chain is Ribosomal RNA small subunit methyltransferase I from Mycoplasmopsis pulmonis (strain UAB CTIP) (Mycoplasma pulmonis).